The sequence spans 95 residues: Aspartyl/glutamyl-tRNA(Asn/Gln) amidotransferase subunit C (95 aa).

This sequence belongs to the GatC family. As to quaternary structure, heterotrimer of A, B and C subunits.

The enzyme catalyses L-glutamyl-tRNA(Gln) + L-glutamine + ATP + H2O = L-glutaminyl-tRNA(Gln) + L-glutamate + ADP + phosphate + H(+). It catalyses the reaction L-aspartyl-tRNA(Asn) + L-glutamine + ATP + H2O = L-asparaginyl-tRNA(Asn) + L-glutamate + ADP + phosphate + 2 H(+). Allows the formation of correctly charged Asn-tRNA(Asn) or Gln-tRNA(Gln) through the transamidation of misacylated Asp-tRNA(Asn) or Glu-tRNA(Gln) in organisms which lack either or both of asparaginyl-tRNA or glutaminyl-tRNA synthetases. The reaction takes place in the presence of glutamine and ATP through an activated phospho-Asp-tRNA(Asn) or phospho-Glu-tRNA(Gln). This chain is Aspartyl/glutamyl-tRNA(Asn/Gln) amidotransferase subunit C, found in Chlorobium phaeovibrioides (strain DSM 265 / 1930) (Prosthecochloris vibrioformis (strain DSM 265)).